Consider the following 382-residue polypeptide: Alkanesulfonate monooxygenase (382 aa).

Belongs to the SsuD family.

The enzyme catalyses an alkanesulfonate + FMNH2 + O2 = an aldehyde + FMN + sulfite + H2O + 2 H(+). In terms of biological role, catalyzes the desulfonation of aliphatic sulfonates. The polypeptide is Alkanesulfonate monooxygenase (Pseudomonas putida (strain ATCC 47054 / DSM 6125 / CFBP 8728 / NCIMB 11950 / KT2440)).